The following is a 444-amino-acid chain: Enolase (444 aa).

2 residues coordinate substrate: His-163 and Glu-172. The active-site Proton donor is Glu-215. Positions 250, 300, and 327 each coordinate Mg(2+). The substrate site is built by Glu-300 and Asp-327. Lys-352 functions as the Proton acceptor in the catalytic mechanism. Residues 379 to 382 (SHRS) and Lys-403 each bind substrate.

Belongs to the enolase family. As to quaternary structure, homodimer. Requires Mg(2+) as cofactor.

It localises to the cytoplasm. It carries out the reaction (2R)-2-phosphoglycerate = phosphoenolpyruvate + H2O. Its pathway is carbohydrate degradation; glycolysis; pyruvate from D-glyceraldehyde 3-phosphate: step 4/5. This chain is Enolase (PGH1), found in Solanum lycopersicum (Tomato).